The sequence spans 690 residues: Elongation factor G (690 aa).

Positions D8–L282 constitute a tr-type G domain. GTP is bound by residues A17 to T24, D81 to H85, and N135 to D138.

It belongs to the TRAFAC class translation factor GTPase superfamily. Classic translation factor GTPase family. EF-G/EF-2 subfamily.

The protein resides in the cytoplasm. Functionally, catalyzes the GTP-dependent ribosomal translocation step during translation elongation. During this step, the ribosome changes from the pre-translocational (PRE) to the post-translocational (POST) state as the newly formed A-site-bound peptidyl-tRNA and P-site-bound deacylated tRNA move to the P and E sites, respectively. Catalyzes the coordinated movement of the two tRNA molecules, the mRNA and conformational changes in the ribosome. The polypeptide is Elongation factor G (Caldanaerobacter subterraneus subsp. tengcongensis (strain DSM 15242 / JCM 11007 / NBRC 100824 / MB4) (Thermoanaerobacter tengcongensis)).